Consider the following 1009-residue polypeptide: Glutamate receptor ionotropic, delta-1 (1009 aa).

The first 20 residues, 1 to 20 (MEALTLWLLPWICQCVSVRA), serve as a signal peptide directing secretion. The tract at residues 21 to 436 (DSIIHIGAIF…ERPMGSRLQG (416 aa)) is interaction with CBLN1. At 21–562 (DSIIHIGAIF…SIFSLFAPFD (542 aa)) the chain is on the extracellular side. 3 disulfide bridges follow: Cys-80/Cys-351, Cys-96/Cys-128, and Cys-294/Cys-306. 2 N-linked (GlcNAc...) asparagine glycosylation sites follow: Asn-131 and Asn-200. Asn-422 and Asn-498 each carry an N-linked (GlcNAc...) asparagine glycan. Residues Glu-527, Val-530, and Asp-531 each coordinate Ca(2+). The helical transmembrane segment at 563 to 583 (FAVWACIAAAIPVVGVLIFVL) threads the bilayer. Residues 584–637 (NRIQAVRAQSAAQPRPSASATLHSAIWIVYGAFVQQGGESSVNSMAMRIVMGSW) are Cytoplasmic-facing. Residues 638 to 658 (WLFTLIVCSSYTANLAAFLTV) form a helical membrane-spanning segment. At 659–830 (SRMDNPIRTF…ADGKSLKLHS (172 aa)) the chain is on the extracellular side. Asp-753, Asp-755, and Ser-757 together coordinate Ca(2+). A helical membrane pass occupies residues 831 to 851 (FAGVFCILAIGLLLACLVAAL). Topologically, residues 852–1009 (ELWWNSNRCH…ALDTSHGTSI (158 aa)) are cytoplasmic. The segment covering 930 to 942 (FLPEQSSHGTSRT) has biased composition (polar residues). The segment at 930–954 (FLPEQSSHGTSRTLSSGPSSNLPLP) is disordered. Residues 943-954 (LSSGPSSNLPLP) show a composition bias toward low complexity.

It belongs to the glutamate-gated ion channel (TC 1.A.10.1) family. GRID1 subfamily. In terms of assembly, homodimer. Interacts (via extracellular N-terminal domain) with CBLN1 (via C1q domain), and more weakly with CBLN2; the interactions mediate the trans-synaptic adhesion complexes also with neurexins and are required for ligand-gated cation channel activity.

Its subcellular location is the postsynaptic cell membrane. It catalyses the reaction Ca(2+)(in) = Ca(2+)(out). The catalysed reaction is Na(+)(in) = Na(+)(out). Member of the ionotropic glutamate receptor family, which plays a crucial role in synaptic organization and signal transduction in the central nervous system. Although it shares structural features with ionotropic glutamate receptors, does not bind glutamate as a primary ligand. Instead, forms trans-synaptic adhesion complexes with presynaptic neurexins and cerebellins, regulating NMDA and AMPA receptor activity and influencing synaptic plasticity through signal transduction. In the presence of neurexins and cerebellins, forms cation-selective channels that are proposed to be gated by glycine and D-serine. However, recent research disputes this ligand-gated cation channel activity. Cation-selective ion channel can be triggered by GRM1 in dopaminergic neurons. Also acts as a receptor for GABA, modulating inhibitory synaptic plasticity through non-ionotropic mechanisms. This Homo sapiens (Human) protein is Glutamate receptor ionotropic, delta-1.